Reading from the N-terminus, the 1905-residue chain is Tudor domain-containing 6-like (1905 aa).

Tudor domains lie at Met1–Met30, Tyr215–Leu279, and Ser435–Leu491. Residues Ser564–Leu795 are disordered. The span at Ser573 to Thr591 shows a compositional bias: basic and acidic residues. Over residues Ser592–Lys602 the composition is skewed to polar residues. Basic and acidic residues predominate over residues Phe622 to Glu631. Polar residues-rich tracts occupy residues Val651–Phe660 and Leu687–Ser704. Residues Arg715–Gln726 are compositionally biased toward basic and acidic residues. Polar residues-rich tracts occupy residues Lys746–Gln766 and Asn774–Lys787. Tudor domains are found at residues Tyr853 to Ile910 and Glu1060 to Ile1118. Disordered regions lie at residues Ile1213 to Val1245, Glu1449 to Glu1599, Val1655 to Val1682, and Glu1827 to Val1905. Composition is skewed to acidic residues over residues Glu1491–Gln1500 and Glu1522–Thr1535. Over residues Ser1553–Leu1588 the composition is skewed to basic and acidic residues. Polar residues predominate over residues Gln1663–Asp1673. The span at Phe1876–Glu1887 shows a compositional bias: acidic residues.

As to quaternary structure, interacts with FRGY2 (a component of messenger ribonucleoprotein (mRNP) particle) during germ cell development. Expressed in testis.

The protein localises to the cytoplasm. In terms of biological role, tudor domain-containing protein involved in germ cell development, more specifically the formation of chromatoid body (during spermiogenesis), Balbiani body (during oogenesis), germ plasm (upon fertilization), and for proper miRNA expression and spliceosome maturation. Component of cytoplasmic mRNP particle through interaction with FRGY2, and binds to maternal mRNA related to cell cycle (RCC1, RHAMM, INCENP-A, MAD2L1, HELLS) and a germ plasm specific mRNA (Dead end/Dnd1), it is proposed a role in translational activation of the maternal mRNAs repressed in mRNP particle. The sequence is that of Tudor domain-containing 6-like from Xenopus laevis (African clawed frog).